The primary structure comprises 354 residues: MTATLERRENASLWGNFCDWITSTENRLYIGWFGVLMIPTLLTATSVFITAFIAAPPVDIDGIREPVSGSLLYGNNIISGAIIPTSAAIGLHFYPIWEAASIDEWLYNGGPYELIVLHFLLGVACYMGREWELSFRLGMRPWIAVAYSAPVAAATAVFLIYPIGQGSFSDGMPLGISGTFNFMIVFQAEHNILMHPFHMLGVAGVFGGSLFSAMHGSLVTSSLIRETTENESANAGYRFGQEEETYNIVAAHGYFGRLIFQYASFNNSRSLHFFLAAWPVVGIWFTALGISTMAFNLNGFNFNQSVVDSQGRVINTWADIINRANLGMEVMHERNAHNFPLDLAASIEAPSLNG.

N-acetylthreonine is present on threonine 2. At threonine 2 the chain carries Phosphothreonine. 3 helical membrane-spanning segments follow: residues 29–46 (YIGW…TATS), 118–133 (HFLL…EWEL), and 142–156 (WIAV…AATA). Position 118 (histidine 118) interacts with chlorophyll a. Residue tyrosine 126 coordinates pheophytin a. Aspartate 170 and glutamate 189 together coordinate [CaMn4O5] cluster. Residues 197-218 (FHMLGVAGVFGGSLFSAMHGSL) traverse the membrane as a helical segment. Chlorophyll a is bound at residue histidine 198. A quinone contacts are provided by residues histidine 215 and 264–265 (SF). Fe cation is bound at residue histidine 215. Residue histidine 272 coordinates Fe cation. Residues 274–288 (FLAAWPVVGIWFTAL) traverse the membrane as a helical segment. Positions 332, 333, 342, and 344 each coordinate [CaMn4O5] cluster. A propeptide spanning residues 345–354 (ASIEAPSLNG) is cleaved from the precursor.

It belongs to the reaction center PufL/M/PsbA/D family. PSII is composed of 1 copy each of membrane proteins PsbA, PsbB, PsbC, PsbD, PsbE, PsbF, PsbH, PsbI, PsbJ, PsbK, PsbL, PsbM, PsbT, PsbX, PsbY, PsbZ, Psb30/Ycf12, at least 3 peripheral proteins of the oxygen-evolving complex and a large number of cofactors. It forms dimeric complexes. Requires The D1/D2 heterodimer binds P680, chlorophylls that are the primary electron donor of PSII, and subsequent electron acceptors. It shares a non-heme iron and each subunit binds pheophytin, quinone, additional chlorophylls, carotenoids and lipids. D1 provides most of the ligands for the Mn4-Ca-O5 cluster of the oxygen-evolving complex (OEC). There is also a Cl(-1) ion associated with D1 and D2, which is required for oxygen evolution. The PSII complex binds additional chlorophylls, carotenoids and specific lipids. as cofactor. In terms of processing, tyr-161 forms a radical intermediate that is referred to as redox-active TyrZ, YZ or Y-Z. Post-translationally, C-terminally processed by CTPA; processing is essential to allow assembly of the oxygen-evolving complex and thus photosynthetic growth.

The protein localises to the plastid. Its subcellular location is the chloroplast thylakoid membrane. It catalyses the reaction 2 a plastoquinone + 4 hnu + 2 H2O = 2 a plastoquinol + O2. Functionally, photosystem II (PSII) is a light-driven water:plastoquinone oxidoreductase that uses light energy to abstract electrons from H(2)O, generating O(2) and a proton gradient subsequently used for ATP formation. It consists of a core antenna complex that captures photons, and an electron transfer chain that converts photonic excitation into a charge separation. The D1/D2 (PsbA/PsbD) reaction center heterodimer binds P680, the primary electron donor of PSII as well as several subsequent electron acceptors. The chain is Photosystem II protein D1 from Selaginella uncinata (Blue spike-moss).